The following is a 59-amino-acid chain: Membrane-associated ATPase epsilon chain (59 aa).

This sequence to E.hirae NtpH. Sul-ATPase is composed of six (or maybe five) subunits: alpha, beta, delta, gamma, C (proteolipid), and possibly epsilon.

The catalysed reaction is ATP + H2O + 4 H(+)(in) = ADP + phosphate + 5 H(+)(out). This Sulfurisphaera tokodaii (strain DSM 16993 / JCM 10545 / NBRC 100140 / 7) (Sulfolobus tokodaii) protein is Membrane-associated ATPase epsilon chain (atpE).